The primary structure comprises 1234 residues: Anion exchange protein 2 (1234 aa).

The interval Met-1–Gly-239 is disordered. At Met-1 to Gln-704 the chain is on the cytoplasmic side. 2 stretches are compositionally biased toward basic and acidic residues: residues Leu-39–Glu-49 and Gly-58–Arg-75. Basic residues-rich tracts occupy residues Gln-76–Leu-85 and Arg-94–Pro-110. Ser-113 carries the phosphoserine modification. The segment covering Thr-120–Glu-133 has biased composition (acidic residues). Phosphoserine occurs at positions 145, 171, and 173. Residues Thr-207 to Ala-216 show a composition bias toward gly residues. Ser-240 is modified (phosphoserine). Thr-254 carries the post-translational modification Phosphothreonine. The residue at position 271 (Lys-271) is an N6-methyllysine. The interval Arg-287–His-315 is disordered. Ser-440 bears the Phosphoserine mark. Positions Ser-446–Ile-467 are disordered. Helical transmembrane passes span Cys-705–Gly-728, Leu-734–Phe-771, Val-791–Val-813, and Ile-823–Ile-843. Residues Cys-705–Val-1234 are membrane (anion exchange). Topologically, residues Phe-844 to Thr-893 are extracellular. 3 N-linked (GlcNAc...) asparagine glycosylation sites follow: Asn-856, Asn-866, and Asn-878. The helical transmembrane segment at Ala-894–Leu-911 threads the bilayer. The Cytoplasmic segment spans residues Arg-912–Arg-926. 5 consecutive transmembrane segments (helical) span residues Val-927–Ile-947, Pro-981–Met-1003, Leu-1029–Ala-1050, Val-1084–Tyr-1129, and Met-1156–Leu-1192. The S-palmitoyl cysteine moiety is linked to residue Cys-1166.

The protein belongs to the anion exchanger (TC 2.A.31) family. As to expression, expressed in the parotid and submandibular glands (at protein level). Expressed in the gastric mucosa (at protein level). Expressed in the choroid plexus epithelium (at protein level). Expressed in the liver and gallbladder.

The protein localises to the apical cell membrane. The protein resides in the basolateral cell membrane. The catalysed reaction is hydrogencarbonate(in) + chloride(out) = hydrogencarbonate(out) + chloride(in). Inhibited by 4,4'-diisothiocyanatostilbene-2,2'-disulfonic acid (DIDS). Its function is as follows. Sodium-independent anion exchanger which mediates the electroneutral exchange of chloride for bicarbonate ions across the cell membrane. Plays an important role in osteoclast differentiation and function. Regulates bone resorption and calpain-dependent actin cytoskeleton organization in osteoclasts via anion exchange-dependent control of pH. Essential for intracellular pH regulation in CD8(+) T-cells upon CD3 stimulation, modulating CD8(+) T-cell responses. This chain is Anion exchange protein 2 (Slc4a2), found in Rattus norvegicus (Rat).